Reading from the N-terminus, the 298-residue chain is Thymidylate synthase (298 aa).

DUMP contacts are provided by residues arginine 25 and 159-160 (RR). Cysteine 179 functions as the Nucleophile in the catalytic mechanism. DUMP-binding positions include 200–203 (RSVD), asparagine 211, and 241–243 (HLY). Aspartate 203 provides a ligand contact to (6R)-5,10-methylene-5,6,7,8-tetrahydrofolate. (6R)-5,10-methylene-5,6,7,8-tetrahydrofolate is bound at residue alanine 297.

It belongs to the thymidylate synthase family. Bacterial-type ThyA subfamily. In terms of assembly, homodimer.

It is found in the cytoplasm. It carries out the reaction dUMP + (6R)-5,10-methylene-5,6,7,8-tetrahydrofolate = 7,8-dihydrofolate + dTMP. The protein operates within pyrimidine metabolism; dTTP biosynthesis. Functionally, catalyzes the reductive methylation of 2'-deoxyuridine-5'-monophosphate (dUMP) to 2'-deoxythymidine-5'-monophosphate (dTMP) while utilizing 5,10-methylenetetrahydrofolate (mTHF) as the methyl donor and reductant in the reaction, yielding dihydrofolate (DHF) as a by-product. This enzymatic reaction provides an intracellular de novo source of dTMP, an essential precursor for DNA biosynthesis. The sequence is that of Thymidylate synthase from Cereibacter sphaeroides (strain ATCC 17029 / ATH 2.4.9) (Rhodobacter sphaeroides).